The sequence spans 122 residues: Large ribosomal subunit protein uL14 (122 aa).

This sequence belongs to the universal ribosomal protein uL14 family. Part of the 50S ribosomal subunit. Forms a cluster with proteins L3 and L19. In the 70S ribosome, L14 and L19 interact and together make contacts with the 16S rRNA in bridges B5 and B8.

Its function is as follows. Binds to 23S rRNA. Forms part of two intersubunit bridges in the 70S ribosome. This chain is Large ribosomal subunit protein uL14, found in Mycobacterium tuberculosis (strain ATCC 25177 / H37Ra).